Here is a 356-residue protein sequence, read N- to C-terminus: S-adenosylmethionine:tRNA ribosyltransferase-isomerase (356 aa).

The protein belongs to the QueA family. As to quaternary structure, monomer.

The protein resides in the cytoplasm. The enzyme catalyses 7-aminomethyl-7-carbaguanosine(34) in tRNA + S-adenosyl-L-methionine = epoxyqueuosine(34) in tRNA + adenine + L-methionine + 2 H(+). The protein operates within tRNA modification; tRNA-queuosine biosynthesis. Functionally, transfers and isomerizes the ribose moiety from AdoMet to the 7-aminomethyl group of 7-deazaguanine (preQ1-tRNA) to give epoxyqueuosine (oQ-tRNA). This is S-adenosylmethionine:tRNA ribosyltransferase-isomerase from Salmonella arizonae (strain ATCC BAA-731 / CDC346-86 / RSK2980).